The sequence spans 238 residues: Protein Iojap, chloroplastic (238 aa).

The transit peptide at 1-66 (MASSTGLTVA…KILTSLSNSR (66 aa)) directs the protein to the chloroplast.

This sequence belongs to the Iojap/RsfS family. Interacts with chloroplast ribosomal protein uL14c (rpl14).

It is found in the plastid. Its subcellular location is the chloroplast. Its function is as follows. May be a ribosome silencing factor (Potential). Involved in plastid biogenesis. The chain is Protein Iojap, chloroplastic (IJ) from Arabidopsis thaliana (Mouse-ear cress).